The chain runs to 61 residues: Large ribosomal subunit protein uL30 (61 aa).

The protein belongs to the universal ribosomal protein uL30 family. Part of the 50S ribosomal subunit.

The protein is Large ribosomal subunit protein uL30 of Rhizorhabdus wittichii (strain DSM 6014 / CCUG 31198 / JCM 15750 / NBRC 105917 / EY 4224 / RW1) (Sphingomonas wittichii).